We begin with the raw amino-acid sequence, 51 residues long: Cytoplasmic FMR1-interacting protein 1 (51 aa).

It belongs to the CYFIP family. As to quaternary structure, component of the WAVE1 complex composed of ABI2, CYFIP1 or CYFIP2, BRK1, NCKAP1 and WASF1/WAVE1. Within the complex, a heterodimer containing NCKAP1 and CYFIP1 interacts with a heterotrimer formed by WAVE1, ABI2 and BRK1. Component of the CYFIP1-EIF4E-FMR1 complex which is composed of CYFIP, EIF4E and FMR1. Interacts with FMR1 but does not bind to related proteins FXR1 or FXR2. Interaction with EIF4E stimulates FMR1 binding. Component of the WAVE2 complex composed of ABI1, CYFIP1/SRA1, NCKAP1/NAP1 (NCKAP1l/HEM1 in hematopoietic cells) and WASF2/WAVE2. Interacts with the active GTP-bound form of RAC1. Interacts through its C-terminus with the C-terminus of DPYSL2/CRMP2 which is necessary for DPYSL2-induced axon outgrowth. Interacts with NYAP1, NYAP2 and MYO16. Interacts with TMEM108 (via N-terminus); the interaction associates TMEM108 with the WAVE1 complex.

It is found in the cytoplasm. The protein resides in the perinuclear region. It localises to the cell projection. Its subcellular location is the lamellipodium. The protein localises to the ruffle. It is found in the synapse. The protein resides in the synaptosome. Component of the CYFIP1-EIF4E-FMR1 complex which binds to the mRNA cap and mediates translational repression. In the CYFIP1-EIF4E-FMR1 complex this subunit is an adapter between EIF4E and FMR1. Promotes the translation repression activity of FMR1 in brain probably by mediating its association with EIF4E and mRNA. Regulates formation of membrane ruffles and lamellipodia. Plays a role in axon outgrowth. Binds to F-actin but not to RNA. Part of the WAVE complex that regulates actin filament reorganization via its interaction with the Arp2/3 complex. Actin remodeling activity is regulated by RAC1. Regulator of epithelial morphogenesis. As component of the WAVE1 complex, required for BDNF-NTRK2 endocytic trafficking and signaling from early endosomes. This is Cytoplasmic FMR1-interacting protein 1 from Bos taurus (Bovine).